The following is a 37-amino-acid chain: Photosystem II reaction center protein K (37 aa).

Over K1 to V15 the chain is Lumenal. A helical transmembrane segment spans residues L16–V30. At Q31 to R37 the chain is on the cytoplasmic side.

This sequence belongs to the PsbK family. As to quaternary structure, PSII is composed of 1 copy each of membrane proteins PsbA, PsbB, PsbC, PsbD, PsbE, PsbF, PsbH, PsbI, PsbJ, PsbK, PsbL, PsbM, PsbT, PsbX, PsbY, PsbZ, Psb30/Ycf12, peripheral proteins PsbO, CyanoQ (PsbQ), PsbU, PsbV and a large number of cofactors. It forms dimeric complexes. Requires PSII binds multiple chlorophylls, carotenoids and specific lipids. as cofactor.

It localises to the cellular thylakoid membrane. Functionally, one of the components of the core complex of photosystem II (PSII). PSII is a light-driven water:plastoquinone oxidoreductase that uses light energy to abstract electrons from H(2)O, generating O(2) and a proton gradient subsequently used for ATP formation. It consists of a core antenna complex that captures photons, and an electron transfer chain that converts photonic excitation into a charge separation. The protein is Photosystem II reaction center protein K of Thermostichus vulcanus (Synechococcus vulcanus).